The chain runs to 228 residues: 2,3-bisphosphoglycerate-dependent phosphoglycerate mutase (228 aa).

Substrate is bound by residues 8–15 (RHGQSEWN), 21–22 (TG), Arg60, 87–90 (ERHY), Lys98, 114–115 (RR), and 183–184 (GN). Residue His9 is the Tele-phosphohistidine intermediate of the active site. Glu87 functions as the Proton donor/acceptor in the catalytic mechanism.

It belongs to the phosphoglycerate mutase family. BPG-dependent PGAM subfamily.

It carries out the reaction (2R)-2-phosphoglycerate = (2R)-3-phosphoglycerate. It functions in the pathway carbohydrate degradation; glycolysis; pyruvate from D-glyceraldehyde 3-phosphate: step 3/5. Its function is as follows. Catalyzes the interconversion of 2-phosphoglycerate and 3-phosphoglycerate. This Staphylococcus haemolyticus (strain JCSC1435) protein is 2,3-bisphosphoglycerate-dependent phosphoglycerate mutase.